Consider the following 152-residue polypeptide: UPF0336 protein Tfu_2666 (152 aa).

A MaoC-like domain is found at 7–116 (YLGRAYELPE…TTITDIKSLA (110 aa)).

It belongs to the UPF0336 family.

In Thermobifida fusca (strain YX), this protein is UPF0336 protein Tfu_2666.